A 96-amino-acid chain; its full sequence is Small ribosomal subunit protein bS16 (96 aa).

It belongs to the bacterial ribosomal protein bS16 family.

The polypeptide is Small ribosomal subunit protein bS16 (Vesicomyosocius okutanii subsp. Calyptogena okutanii (strain HA)).